The primary structure comprises 242 residues: Probable transcriptional regulatory protein NMA1902 (242 aa).

It belongs to the TACO1 family.

The protein resides in the cytoplasm. This is Probable transcriptional regulatory protein NMA1902 from Neisseria meningitidis serogroup A / serotype 4A (strain DSM 15465 / Z2491).